The chain runs to 420 residues: MFIHIVGPGDSLFSIGRRYGASVDQIRGVNGLDETNIVPGQALLIPLYVYTVQPRDTLTAIAAKAFVPLERLRAANPGISPNALQAGAKITIPSISNYIAGTLSFYVLRNPDLDRELINDYAPYSSSISIFEYHIAPNGDIANQLNDAAAIETTWQRRVTPLATITNLTSGGFSTEIVHQVLNNPTARTNLVNNIYDLVSTRGYGGVTIDFEQVSAADRDLFTGFLRQLRDRLQAGGYVLTIAVPAKTSDNIPWLRGYDYGGIGAVVNYMFIMAYDWHHAGSEPGPVAPITEIRRTIEFTIAQVPSRKIIIGVPLYGYDWIIPYQPGTVASAISNQNAIERAMRYQAPIQYSAEYQSPFFRYSDQQGRTHEVWFEDVRSMSRKMQIVREYRLQAIGAWQLTLGFTPGPWLLRKFFTIRKV.

LysM domains are found at residues 2–45 (FIHI…ALLI) and 48–92 (YVYT…KITI). The region spanning 100 to 420 (AGTLSFYVLR…LRKFFTIRKV (321 aa)) is the GH18 domain. Catalysis depends on Glu-212, which acts as the Proton donor.

Belongs to the glycosyl hydrolase 18 family. Chitinase class II subfamily.

The protein localises to the spore wall. In Bacillus subtilis (strain 168), this protein is Putative sporulation-specific glycosylase YdhD (ydhD).